The primary structure comprises 232 residues: Small ribosomal subunit protein uS5 (232 aa).

The disordered stretch occupies residues Met1–Lys47. Positions Glu7–Asp19 are enriched in polar residues. Residues Asn20 to Lys47 show a composition bias toward basic and acidic residues. In terms of domain architecture, S5 DRBM spans Phe50 to Val113.

This sequence belongs to the universal ribosomal protein uS5 family. Part of the 30S ribosomal subunit. Contacts proteins S4 and S8.

Its function is as follows. With S4 and S12 plays an important role in translational accuracy. Located at the back of the 30S subunit body where it stabilizes the conformation of the head with respect to the body. This Leifsonia xyli subsp. xyli (strain CTCB07) protein is Small ribosomal subunit protein uS5.